The primary structure comprises 66 residues: Cold shock protein 2 (66 aa).

The CSD domain maps to 4-63 (GTVKWFNADKGFGFITGEDGTDVFVHFSAIQTDGFKTLDEGQKVTYDEEQGDRGPQATNV).

Its subcellular location is the cytoplasm. This Lactiplantibacillus plantarum (strain ATCC BAA-793 / NCIMB 8826 / WCFS1) (Lactobacillus plantarum) protein is Cold shock protein 2 (cspL).